The primary structure comprises 361 residues: Histidine biosynthesis bifunctional protein HisB (361 aa).

A histidinol-phosphatase region spans residues 1 to 172; the sequence is MSQPTLFIDR…PKTTACERPP (172 aa). Catalysis depends on aspartate 9, which acts as the Nucleophile. Mg(2+)-binding residues include aspartate 9 and aspartate 11. The active-site Proton donor is the aspartate 11. The Zn(2+) site is built by cysteine 92, histidine 94, cysteine 100, and cysteine 102. Mg(2+) is bound at residue aspartate 129. Positions 173–361 are imidazoleglycerol-phosphate dehydratase; that stretch reads RYAEVVRTTK…NELPSSKGVL (189 aa).

This sequence in the N-terminal section; belongs to the histidinol-phosphatase family. It in the C-terminal section; belongs to the imidazoleglycerol-phosphate dehydratase family. Requires Mg(2+) as cofactor. Zn(2+) serves as cofactor.

The protein resides in the cytoplasm. The catalysed reaction is D-erythro-1-(imidazol-4-yl)glycerol 3-phosphate = 3-(imidazol-4-yl)-2-oxopropyl phosphate + H2O. It catalyses the reaction L-histidinol phosphate + H2O = L-histidinol + phosphate. Its pathway is amino-acid biosynthesis; L-histidine biosynthesis; L-histidine from 5-phospho-alpha-D-ribose 1-diphosphate: step 6/9. The protein operates within amino-acid biosynthesis; L-histidine biosynthesis; L-histidine from 5-phospho-alpha-D-ribose 1-diphosphate: step 8/9. The sequence is that of Histidine biosynthesis bifunctional protein HisB from Actinobacillus pleuropneumoniae serotype 7 (strain AP76).